The following is a 104-amino-acid chain: Small ribosomal subunit protein uS10 (104 aa).

The protein belongs to the universal ribosomal protein uS10 family. As to quaternary structure, part of the 30S ribosomal subunit.

In terms of biological role, involved in the binding of tRNA to the ribosomes. The protein is Small ribosomal subunit protein uS10 of Dichelobacter nodosus (strain VCS1703A).